The primary structure comprises 96 residues: Small ribosomal subunit protein bS6 (96 aa).

The protein belongs to the bacterial ribosomal protein bS6 family.

Binds together with bS18 to 16S ribosomal RNA. In Bacillus cereus (strain ATCC 10987 / NRS 248), this protein is Small ribosomal subunit protein bS6.